The sequence spans 355 residues: Elongation factor Ts (355 aa).

The segment at 82-85 is involved in Mg(2+) ion dislocation from EF-Tu; that stretch reads TDFV.

The protein belongs to the EF-Ts family.

It is found in the cytoplasm. In terms of biological role, associates with the EF-Tu.GDP complex and induces the exchange of GDP to GTP. It remains bound to the aminoacyl-tRNA.EF-Tu.GTP complex up to the GTP hydrolysis stage on the ribosome. The polypeptide is Elongation factor Ts (tsf) (Helicobacter pylori (strain J99 / ATCC 700824) (Campylobacter pylori J99)).